The sequence spans 406 residues: Cysteine desulfurase (406 aa).

The residue at position 226 (K226) is an N6-(pyridoxal phosphate)lysine. The active-site Cysteine persulfide intermediate is C364.

The protein belongs to the class-V pyridoxal-phosphate-dependent aminotransferase family. Csd subfamily. In terms of assembly, homodimer. Interacts with SufE and the SufBCD complex composed of SufB, SufC and SufD. The interaction with SufE is required to mediate the direct transfer of the sulfur atom from the S-sulfanylcysteine. Pyridoxal 5'-phosphate is required as a cofactor.

The protein resides in the cytoplasm. The catalysed reaction is (sulfur carrier)-H + L-cysteine = (sulfur carrier)-SH + L-alanine. The enzyme catalyses L-selenocysteine + AH2 = hydrogenselenide + L-alanine + A + H(+). The protein operates within cofactor biosynthesis; iron-sulfur cluster biosynthesis. Functionally, cysteine desulfurases mobilize the sulfur from L-cysteine to yield L-alanine, an essential step in sulfur metabolism for biosynthesis of a variety of sulfur-containing biomolecules. Component of the suf operon, which is activated and required under specific conditions such as oxidative stress and iron limitation. Acts as a potent selenocysteine lyase in vitro, that mobilizes selenium from L-selenocysteine. Selenocysteine lyase activity is however unsure in vivo. The protein is Cysteine desulfurase of Salmonella choleraesuis (strain SC-B67).